Consider the following 115-residue polypeptide: U3-lycotoxin-Ls1a (115 aa).

Residues 1–20 (MKFVLLFGVLLLTLFSYSSA) form the signal peptide. A propeptide spanning residues 21 to 44 (EMLDDFDQADEDELLSLIEKEEAR) is cleaved from the precursor. 4 cysteine pairs are disulfide-bonded: Cys48-Cys63, Cys55-Cys72, Cys62-Cys87, and Cys74-Cys85.

The protein belongs to the neurotoxin 19 (CSTX) family. 01 subfamily. As to expression, expressed by the venom gland.

Its subcellular location is the secreted. This chain is U3-lycotoxin-Ls1a, found in Lycosa singoriensis (Wolf spider).